Consider the following 397-residue polypeptide: Tryptophan synthase beta chain (397 aa).

Lys91 is modified (N6-(pyridoxal phosphate)lysine).

Belongs to the TrpB family. Tetramer of two alpha and two beta chains. Pyridoxal 5'-phosphate is required as a cofactor.

The enzyme catalyses (1S,2R)-1-C-(indol-3-yl)glycerol 3-phosphate + L-serine = D-glyceraldehyde 3-phosphate + L-tryptophan + H2O. It participates in amino-acid biosynthesis; L-tryptophan biosynthesis; L-tryptophan from chorismate: step 5/5. Functionally, the beta subunit is responsible for the synthesis of L-tryptophan from indole and L-serine. The polypeptide is Tryptophan synthase beta chain (Bacillus thuringiensis (strain Al Hakam)).